The chain runs to 491 residues: Transcription factor unc-3 (491 aa).

Positions 66–69 are interaction with DNA; it reads RKSN. The C5-type zinc-finger motif lies at 154 to 173; it reads CRVLLTHEVMCSRCCEKKSC. Interaction with DNA stretches follow at residues 200 to 207 and 239 to 242; these read NCLKNAGN and NNSK. Residues 240 to 261 form a disordered region; the sequence is NSKHGRRTKRTDASDDSEYSES. The IPT/TIG domain maps to 269–355; it reads PVIKALFPSE…SRGTPLRFSY (87 aa).

It belongs to the COE family. In terms of assembly, may homodimerise. Interacts with jmjd-3.1. May interact with GFI1 homolog pag-3.

It localises to the nucleus. Transcription factor. Involved in motor neuron fate determination and maintenance, acting as an activator of gene expression in a subset of motor neurons. May act in concert with GFI1 homolog pag-3 in motor neuron fate determination. Required to maintain the expression of transcriptional repressors bnc-1 and cfi-1, which play roles in the cell fate of motor neurons. May play a role in the expression of proteins essential for axonal pathfinding and/or neuronal differentiation in both sensory and motor neurons. Cooperates with jmjd-3.1 and wdr-5.1 to ensure robust transdifferentiation of the Y rectal cell to the PDA motor neuron during larval development. This chain is Transcription factor unc-3 (unc-3), found in Caenorhabditis elegans.